The sequence spans 404 residues: S-adenosylmethionine synthase (404 aa).

Positions 1–13 (MSQSRYFFTSESV) are enriched in polar residues. The disordered stretch occupies residues 1 to 21 (MSQSRYFFTSESVSEGHPDKV). Histidine 17 is an ATP binding site. Aspartate 19 contributes to the Mg(2+) binding site. Glutamate 45 is a K(+) binding site. The L-methionine site is built by glutamate 58 and glutamine 101. The segment at 101–111 (QSPDINRGVDR) is flexible loop. Residues 172–174 (DAK), 245–246 (RF), aspartate 254, 260–261 (RK), alanine 277, and lysine 281 contribute to the ATP site. Aspartate 254 contacts L-methionine. Residue lysine 285 participates in L-methionine binding.

It belongs to the AdoMet synthase family. Homotetramer; dimer of dimers. It depends on Mg(2+) as a cofactor. K(+) serves as cofactor.

Its subcellular location is the cytoplasm. It catalyses the reaction L-methionine + ATP + H2O = S-adenosyl-L-methionine + phosphate + diphosphate. The protein operates within amino-acid biosynthesis; S-adenosyl-L-methionine biosynthesis; S-adenosyl-L-methionine from L-methionine: step 1/1. Its function is as follows. Catalyzes the formation of S-adenosylmethionine (AdoMet) from methionine and ATP. The overall synthetic reaction is composed of two sequential steps, AdoMet formation and the subsequent tripolyphosphate hydrolysis which occurs prior to release of AdoMet from the enzyme. This is S-adenosylmethionine synthase from Chlorobium phaeobacteroides (strain DSM 266 / SMG 266 / 2430).